Reading from the N-terminus, the 874-residue chain is Pentatricopeptide repeat-containing protein At2g17140 (874 aa).

19 PPR repeats span residues 111–145, 146–180, 181–215, 216–250, 251–285, 290–320, 325–359, 360–394, 395–429, 430–464, 465–499, 523–557, 558–592, 593–627, 628–662, 663–693, 697–731, 732–766, and 767–797; these read SVYL…GIAP, QTYT…GCKP, NEFT…GVLP, NKVI…GLVP, DIVT…EYLG, NSIT…IREN, SLQS…GIGP, SIYS…GVCP, DAVT…NCLP, NAYT…GYGL, DTVT…GSAA, DLIT…KLQP, DSVA…GCHK, SLET…GISP, NICT…NIAP, NVFS…AVSI, KEGL…GFEL, GTFL…GYGF, and DPAA…MMEM.

Belongs to the PPR family. P subfamily.

This is Pentatricopeptide repeat-containing protein At2g17140 from Arabidopsis thaliana (Mouse-ear cress).